Consider the following 137-residue polypeptide: Large ribosomal subunit protein uL13 (137 aa).

The protein belongs to the universal ribosomal protein uL13 family. Part of the 50S ribosomal subunit.

Functionally, this protein is one of the early assembly proteins of the 50S ribosomal subunit, although it is not seen to bind rRNA by itself. It is important during the early stages of 50S assembly. The chain is Large ribosomal subunit protein uL13 from Methanocaldococcus jannaschii (strain ATCC 43067 / DSM 2661 / JAL-1 / JCM 10045 / NBRC 100440) (Methanococcus jannaschii).